Here is a 144-residue protein sequence, read N- to C-terminus: Cell division protein SepF (144 aa).

Over residues 21 to 38 the composition is skewed to polar residues; that stretch reads TDLQGTKTTDEVSPTSRP. The interval 21–40 is disordered; the sequence is TDLQGTKTTDEVSPTSRPDN.

The protein belongs to the SepF family. Homodimer. Interacts with FtsZ.

The protein resides in the cytoplasm. Its function is as follows. Cell division protein that is part of the divisome complex and is recruited early to the Z-ring. Probably stimulates Z-ring formation, perhaps through the cross-linking of FtsZ protofilaments. Its function overlaps with FtsA. In Latilactobacillus sakei subsp. sakei (strain 23K) (Lactobacillus sakei subsp. sakei), this protein is Cell division protein SepF.